Here is a 152-residue protein sequence, read N- to C-terminus: Lipoprotein signal peptidase (152 aa).

3 helical membrane-spanning segments follow: residues 5–25 (LFVLSLILLVALDQLSKFWIV), 61–81 (WFFVVITVLVIGYAIYYLATH), and 84–104 (LNIWKQLALLLIISGGIGNFI). Active-site residues include Asp114 and Asp130. The chain crosses the membrane as a helical span at residues 125 to 145 (IFNVADSYLTVGVILLVICLW).

Belongs to the peptidase A8 family.

It localises to the cell membrane. The enzyme catalyses Release of signal peptides from bacterial membrane prolipoproteins. Hydrolyzes -Xaa-Yaa-Zaa-|-(S,diacylglyceryl)Cys-, in which Xaa is hydrophobic (preferably Leu), and Yaa (Ala or Ser) and Zaa (Gly or Ala) have small, neutral side chains.. It participates in protein modification; lipoprotein biosynthesis (signal peptide cleavage). This protein specifically catalyzes the removal of signal peptides from prolipoproteins. This chain is Lipoprotein signal peptidase, found in Streptococcus pyogenes serotype M18 (strain MGAS8232).